The primary structure comprises 250 residues: HTH-type transcriptional regulator SarS (250 aa).

2 DNA-binding regions (H-T-H motif) span residues 53-76 (FKKIVSDLCYKQSDLVQHIKVLVK) and 177-200 (LKDLIETIHHKYPQTVRALNNLKK).

Belongs to the SarA family.

The protein resides in the cytoplasm. Its function is as follows. Transcriptional regulator that controls expression of some virulence factors in a cell density-dependent manner. This chain is HTH-type transcriptional regulator SarS (sarS), found in Staphylococcus aureus (strain MRSA252).